The chain runs to 240 residues: Large ribosomal subunit protein uL1 (240 aa).

Belongs to the universal ribosomal protein uL1 family. As to quaternary structure, part of the 50S ribosomal subunit.

Binds directly to 23S rRNA. The L1 stalk is quite mobile in the ribosome, and is involved in E site tRNA release. In terms of biological role, protein L1 is also a translational repressor protein, it controls the translation of the L11 operon by binding to its mRNA. In Nocardioides sp. (strain ATCC BAA-499 / JS614), this protein is Large ribosomal subunit protein uL1.